Here is a 1111-residue protein sequence, read N- to C-terminus: Nuclear migration and anchoring protein unc-84 (1111 aa).

The Nuclear portion of the chain corresponds to 1–509 (MAPATEADNN…LTDKKSSKFS (509 aa)). Required for nuclear envelope localization regions lie at residues 118–244 (YILR…SQTL) and 503–507 (KKSSK). The segment at 232-253 (ERASRMTTRSQTLERSRKFDGL) is disordered. Over residues 243–252 (TLERSRKFDG) the composition is skewed to basic and acidic residues. The chain crosses the membrane as a helical span at residues 510-530 (WCQILGLLLALLFAIFLLGFL). Over 531 to 1111 (TSDNTAIRVK…LRVHGKVVQV (581 aa)) the chain is Perinuclear space. The interval 912-1111 (QYDKNHLEAI…LRVHGKVVQV (200 aa)) is interaction with zyg-12. Residues 945-1109 (GGAVVSTRCS…YRLRVHGKVV (165 aa)) form the SUN domain.

In terms of assembly, component of the unc-83-unc-84 LINC complex which contains at least unc-83 and unc-84. Within the unc-83-unc-84 LINC complex interacts (via C-terminus) with unc-83; the interaction is probably required to recruit unc-83 to the nuclear membrane. Most likely interacts with anc-1; the interaction is probably required to recruit anc-1 to the nuclear envelope. Interacts (via C-terminus) with zyg-12 (via C-terminus); the interaction is direct. May interact with lmn-1; this interaction may be required to complete the connection between the nuclear lamina and the cytoskeleton. As to expression, expressed in all somatic cells. Not expressed in germ cells in the mitotic and transition zones of the gonad. One study shows expression at the beginning of the late pachytene stage in the proximal gonad, but there is no expression in the male germline, suggesting expression is specific to oogenesis in hermaphrodites.

It localises to the nucleus inner membrane. The protein localises to the cytoplasm. Its subcellular location is the cytoskeleton. Functionally, involved in nuclear migration and anchoring in hypodermal precursor cells. Most likely recruits anc-1 to the nuclear envelope where anc-1 functions to tether the nucleus to the actin cytoskeleton. Component of the unc-83-unc-84 LINC (LInker of Nucleoskeleton and Cytoskeleton) complex where it recruits and interacts with unc-83 to form a bridge connecting the nuclear envelope to the cytoskeleton which allows for nuclear transport along microtubules. Its role in nuclear migration may be in association with lamin, lmn-1. Regulates nuclear migrations in one-cell embryos, controlling the posterior migration of the male pronucleus following fertilization. Not required for centrosome attachment to the nucleus. Plays a role in the maintenance of the nuclear envelope architecture in body wall muscle cells. May be involved in DNA damage repair through an association with zyg-12. Potentially has roles in homologous recombination, double strand break repair and meiotic recombination. Specifically, may in part inhibit non-homologous end joining repair, most likely through recruiting fan-1 to the nucleoplasm, to facilitate the repair of DNA cross-links. The protein is Nuclear migration and anchoring protein unc-84 of Caenorhabditis elegans.